Reading from the N-terminus, the 235-residue chain is Lipoprotein signal peptidase (235 aa).

Positions 1–23 (MTDETSGPAEPVTDAPGDAESPA) are disordered. The next 3 membrane-spanning stretches (helical) occupy residues 31–51 (LLLT…VLAV), 84–104 (GYTW…IWMG), and 108–128 (VSPW…GNLV). Residues Asp-144 and Asp-158 contribute to the active site. Residues 156–176 (VADPSVVGGAILLVALSLFGF) form a helical membrane-spanning segment. Positions 185-235 (RPGEDAEPSAGASDSTPEAPAADGPDKPAGPVGPEDAAEESKTVGHQAEPS) are disordered. Low complexity predominate over residues 201 to 218 (PEAPAADGPDKPAGPVGP).

The protein belongs to the peptidase A8 family.

It localises to the cell membrane. It carries out the reaction Release of signal peptides from bacterial membrane prolipoproteins. Hydrolyzes -Xaa-Yaa-Zaa-|-(S,diacylglyceryl)Cys-, in which Xaa is hydrophobic (preferably Leu), and Yaa (Ala or Ser) and Zaa (Gly or Ala) have small, neutral side chains.. Its pathway is protein modification; lipoprotein biosynthesis (signal peptide cleavage). In terms of biological role, this protein specifically catalyzes the removal of signal peptides from prolipoproteins. This Mycolicibacterium smegmatis (strain ATCC 700084 / mc(2)155) (Mycobacterium smegmatis) protein is Lipoprotein signal peptidase.